The chain runs to 254 residues: 3-deoxy-manno-octulosonate cytidylyltransferase (254 aa).

The protein belongs to the KdsB family.

It is found in the cytoplasm. The enzyme catalyses 3-deoxy-alpha-D-manno-oct-2-ulosonate + CTP = CMP-3-deoxy-beta-D-manno-octulosonate + diphosphate. It participates in nucleotide-sugar biosynthesis; CMP-3-deoxy-D-manno-octulosonate biosynthesis; CMP-3-deoxy-D-manno-octulosonate from 3-deoxy-D-manno-octulosonate and CTP: step 1/1. It functions in the pathway bacterial outer membrane biogenesis; lipopolysaccharide biosynthesis. In terms of biological role, activates KDO (a required 8-carbon sugar) for incorporation into bacterial lipopolysaccharide in Gram-negative bacteria. The chain is 3-deoxy-manno-octulosonate cytidylyltransferase from Bordetella parapertussis (strain 12822 / ATCC BAA-587 / NCTC 13253).